Consider the following 203-residue polypeptide: Histone deacetylase HDT4 (203 aa).

A required to repress transcription region spans residues Glu-2 to Gly-5. Residues Ala-121 to Lys-203 are disordered. A compositionally biased stretch (acidic residues) spans Asn-129 to Ala-157. Over residues Gly-180–Cys-193 the composition is skewed to basic residues.

It belongs to the histone deacetylase HD2 family. As to expression, confined to stems and flowers with young siliques.

It localises to the nucleus. Its subcellular location is the nucleolus. Probably mediates the deacetylation of lysine residues lysine residues on the N-terminal part of the core histones (H2A, H2B, H3 and H4). Histone deacetylation gives a tag for epigenetic repression and plays an important role in transcriptional regulation, cell cycle progression and developmental events. The polypeptide is Histone deacetylase HDT4 (HDT4) (Arabidopsis thaliana (Mouse-ear cress)).